The following is a 261-amino-acid chain: MSYQYVNVVTINKVAVIEFNYGRKLNALSKVFIDDLMQALSDLNRPEIRCIILRAPSGSKVFSAGHDIHELPSGGRDPLSYDDPLRQITRMIQKFPKPIISMVEGSVWGGAFEMIMSSDLIIAASTSTFSMTPVNLGVPYNLVGIHNLTRDAGFHIVKELIFTASPITAQRALAVGILNHVVEVEELEDFTLQMAHHISEKAPLAIAVIKEELRVLGEAHTMNSDEFERIQGMRRAVYDSEDYQEGMNAFLEKRKPNFVGH.

Substrate contacts are provided by residues 64–68 (AGHDI), Gly110, Thr132, and Lys253.

It belongs to the enoyl-CoA hydratase/isomerase family. Dimer of homotrimers.

It catalyses the reaction (R)-methylmalonyl-CoA + H(+) = propanoyl-CoA + CO2. In terms of biological role, catalyzes the decarboxylation of (R)-methylmalonyl-CoA to propionyl-CoA. Could be part of a pathway that converts succinate to propanoate. The protein is Methylmalonyl-CoA decarboxylase (scpB) of Escherichia coli (strain K12).